A 77-amino-acid chain; its full sequence is U8-lycotoxin-Ls1g (77 aa).

The N-terminal stretch at 1 to 20 (MKLIIFTGLVLFAIVSLIEV) is a signal peptide. Residues 21–26 (QADNER) constitute a propeptide that is removed on maturation.

The protein belongs to the neurotoxin 19 (CSTX) family. 08 (U8-Lctx) subfamily. In terms of processing, contains 4 disulfide bonds. In terms of tissue distribution, expressed by the venom gland.

It is found in the secreted. This is U8-lycotoxin-Ls1g from Lycosa singoriensis (Wolf spider).